Consider the following 379-residue polypeptide: Homoserine O-acetyltransferase (379 aa).

Residues 1–24 (MSHDTTPPLPATGAWREGDPPGDR) form a disordered region. The AB hydrolase-1 domain maps to 60–365 (NAVLVLHALT…ASGHDGFLTE (306 aa)). Residue serine 165 is the Nucleophile of the active site. Arginine 236 is a substrate binding site. Catalysis depends on residues aspartate 329 and histidine 359. Residue aspartate 360 participates in substrate binding.

Belongs to the AB hydrolase superfamily. MetX family. In terms of assembly, homodimer.

The protein localises to the cytoplasm. It carries out the reaction L-homoserine + acetyl-CoA = O-acetyl-L-homoserine + CoA. The protein operates within amino-acid biosynthesis; L-methionine biosynthesis via de novo pathway; O-acetyl-L-homoserine from L-homoserine: step 1/1. Its function is as follows. Transfers an acetyl group from acetyl-CoA to L-homoserine, forming acetyl-L-homoserine. The chain is Homoserine O-acetyltransferase from Thermobifida fusca (strain YX).